Here is a 219-residue protein sequence, read N- to C-terminus: 2-phospho-L-lactate guanylyltransferase (219 aa).

It belongs to the CofC family. Homodimer.

The enzyme catalyses (2S)-2-phospholactate + GTP + H(+) = (2S)-lactyl-2-diphospho-5'-guanosine + diphosphate. It functions in the pathway cofactor biosynthesis; coenzyme F420 biosynthesis. Guanylyltransferase that catalyzes the activation of (2S)-2-phospholactate (2-PL) as (2S)-lactyl-2-diphospho-5'-guanosine, via the condensation of 2-PL with GTP. It is involved in the biosynthesis of coenzyme F420, a hydride carrier cofactor. This is 2-phospho-L-lactate guanylyltransferase from Methanocella arvoryzae (strain DSM 22066 / NBRC 105507 / MRE50).